Reading from the N-terminus, the 228-residue chain is MKAILLLSGGMDSLVTTAIAQQAGFELAAMHVNYGQRTMQRELNSFRAICSHYSIQQRLEINADFLGKIGGSSLTDLSMPVSVANLESHAIPASYVPFRNAGFLSMAVSWAEVIGAERIFIGAVEEDSSGYPDCRKIFYEAFNRVIELGTKPETHIEVVTPLIALKKWEIVRKGIELHAPFAFSWSCYKNEGQACGVCDSCALRLRAFEQAGMEDPIDYETRPHYIDC.

Position 7-17 (7-17 (LSGGMDSLVTT)) interacts with ATP. Positions 187, 195, 198, and 201 each coordinate Zn(2+).

This sequence belongs to the QueC family. Requires Zn(2+) as cofactor.

The catalysed reaction is 7-carboxy-7-deazaguanine + NH4(+) + ATP = 7-cyano-7-deazaguanine + ADP + phosphate + H2O + H(+). It functions in the pathway purine metabolism; 7-cyano-7-deazaguanine biosynthesis. Functionally, catalyzes the ATP-dependent conversion of 7-carboxy-7-deazaguanine (CDG) to 7-cyano-7-deazaguanine (preQ(0)). This Chlorobium chlorochromatii (strain CaD3) protein is 7-cyano-7-deazaguanine synthase.